A 476-amino-acid polypeptide reads, in one-letter code: RNA-binding protein 45 (476 aa).

Gly residues predominate over residues 1–14; sequence MDDAGGLGGSGGFR. The tract at residues 1 to 20 is disordered; sequence MDDAGGLGGSGGFRPGVDSL. RRM domains are found at residues 26-106 and 121-192; these read SRIF…IAQS and TRIF…LAEP. K34 participates in a covalent cross-link: Glycyl lysine isopeptide (Lys-Gly) (interchain with G-Cter in SUMO2). The interval 192–212 is disordered; it reads PKNKVSGSPEQDDYSSGRQEA. The span at 196 to 209 shows a compositional bias: polar residues; the sequence is VSGSPEQDDYSSGR. S199 and S464 each carry phosphoserine. Residues 392–464 form the RRM 3 domain; that stretch reads ERLFVVFNPH…VRLKVMLADS (73 aa).

The protein localises to the cytoplasm. The protein resides in the nucleus. Functionally, RNA-binding protein with binding specificity for poly(C). May play an important role in neural development. In Mus musculus (Mouse), this protein is RNA-binding protein 45 (Rbm45).